The sequence spans 178 residues: Ribosomal RNA small subunit methyltransferase G (178 aa).

S-adenosyl-L-methionine contacts are provided by residues glycine 54, leucine 59, 105 to 106 (LE), and arginine 120.

This sequence belongs to the methyltransferase superfamily. RNA methyltransferase RsmG family.

The protein localises to the cytoplasm. It carries out the reaction guanosine(527) in 16S rRNA + S-adenosyl-L-methionine = N(7)-methylguanosine(527) in 16S rRNA + S-adenosyl-L-homocysteine. Functionally, specifically methylates the N7 position of guanine in position 527 of 16S rRNA. In Helicobacter pylori (strain ATCC 700392 / 26695) (Campylobacter pylori), this protein is Ribosomal RNA small subunit methyltransferase G.